Reading from the N-terminus, the 156-residue chain is Lipoprotein signal peptidase (156 aa).

A run of 3 helical transmembrane segments spans residues 5–25 (FKFI…DQWV), 64–84 (YLHL…KTLL), and 89–109 (IAFG…FIHG). Active-site residues include aspartate 113 and aspartate 130. A helical membrane pass occupies residues 122 to 142 (NFAIFNVADVMINISVALILI).

It belongs to the peptidase A8 family.

The protein resides in the cell inner membrane. It catalyses the reaction Release of signal peptides from bacterial membrane prolipoproteins. Hydrolyzes -Xaa-Yaa-Zaa-|-(S,diacylglyceryl)Cys-, in which Xaa is hydrophobic (preferably Leu), and Yaa (Ala or Ser) and Zaa (Gly or Ala) have small, neutral side chains.. Its pathway is protein modification; lipoprotein biosynthesis (signal peptide cleavage). Its function is as follows. This protein specifically catalyzes the removal of signal peptides from prolipoproteins. The sequence is that of Lipoprotein signal peptidase from Campylobacter jejuni subsp. jejuni serotype O:23/36 (strain 81-176).